The sequence spans 555 residues: uncharacterized protein (555 aa).

5 helical membrane-spanning segments follow: residues 13–30 (ALQA…GLGL), 35–57 (FWGV…HFGL), 72–91 (LVIF…FSSF), 98–120 (LNML…SYAT), and 157–179 (TPAL…AVLL). RCK C-terminal domains lie at 188-273 (EDLE…LFGE) and 282-366 (KEDI…VLGN). The next 6 membrane-spanning stretches (helical) occupy residues 376 to 398 (LVVI…SIPG), 408 to 430 (AGGP…MITY), 437 to 459 (LMLR…GAHF), 469 to 491 (LLWI…FVAF), 498 to 517 (FGSV…ALNY), and 532 to 554 (ATVY…MFLL).

This sequence belongs to the AAE transporter (TC 2.A.81) family.

It is found in the cell membrane. This is an uncharacterized protein from Bacteroides thetaiotaomicron (strain ATCC 29148 / DSM 2079 / JCM 5827 / CCUG 10774 / NCTC 10582 / VPI-5482 / E50).